The sequence spans 935 residues: C-1-tetrahydrofolate synthase, cytoplasmic (935 aa).

M1 carries the N-acetylmethionine modification. The interval 2 to 291 is methylenetetrahydrofolate dehydrogenase and methenyltetrahydrofolate cyclohydrolase (D/C) domain; sequence APAGILNGKL…MLMQSTVESA (290 aa). Substrate contacts are provided by residues 52–56 and 99–101; these read YINVK and VQL. K56 is a catalytic residue. NADP(+) is bound by residues 172-174 and S197; that span reads GRS. Residue 272–276 coordinates substrate; it reads PGGVG. Positions 310–935 are formyltetrahydrofolate synthetase domain; sequence LNLKTPVPSD…PETEQVNGLF (626 aa). The residue at position 318 (S318) is a Phosphoserine. 380-387 is an ATP binding site; that stretch reads TPLGEGKS. 2 positions are modified to phosphoserine: S413 and S490.

This sequence in the N-terminal section; belongs to the tetrahydrofolate dehydrogenase/cyclohydrolase family. The protein in the C-terminal section; belongs to the formate--tetrahydrofolate ligase family. As to quaternary structure, homodimer.

Its subcellular location is the cytoplasm. It catalyses the reaction (6R)-5,10-methylene-5,6,7,8-tetrahydrofolate + NADP(+) = (6R)-5,10-methenyltetrahydrofolate + NADPH. The catalysed reaction is (6R)-5,10-methenyltetrahydrofolate + H2O = (6R)-10-formyltetrahydrofolate + H(+). The enzyme catalyses (6S)-5,6,7,8-tetrahydrofolate + formate + ATP = (6R)-10-formyltetrahydrofolate + ADP + phosphate. It functions in the pathway one-carbon metabolism; tetrahydrofolate interconversion. Trifunctional enzyme that catalyzes the interconversion of three forms of one-carbon-substituted tetrahydrofolate: (6R)-5,10-methylene-5,6,7,8-tetrahydrofolate, 5,10-methenyltetrahydrofolate and (6S)-10-formyltetrahydrofolate. These derivatives of tetrahydrofolate are differentially required in nucleotide and amino acid biosynthesis, (6S)-10-formyltetrahydrofolate being required for purine biosynthesis while (6R)-5,10-methylene-5,6,7,8-tetrahydrofolate is used for serine and methionine biosynthesis for instance. This chain is C-1-tetrahydrofolate synthase, cytoplasmic (Mthfd1), found in Mus musculus (Mouse).